The primary structure comprises 102 residues: RNA-binding protein Hfq (102 aa).

The Sm domain occupies 9–68; sequence DPFLNALRRERVPVSIYLVNGIKLQGQIESFDQFVILLKNTVSQMVYKHAISTVVPSRPV. Positions 63–102 are disordered; it reads VPSRPVSHHSNNAGGGSSNYHHGGSAQGSSAPQQDSDDAE. Over residues 70–86 the composition is skewed to low complexity; sequence HHSNNAGGGSSNYHHGG.

The protein belongs to the Hfq family. In terms of assembly, homohexamer.

RNA chaperone that binds small regulatory RNA (sRNAs) and mRNAs to facilitate mRNA translational regulation in response to envelope stress, environmental stress and changes in metabolite concentrations. Also binds with high specificity to tRNAs. The polypeptide is RNA-binding protein Hfq (Klebsiella pneumoniae (strain 342)).